The sequence spans 558 residues: GPI mannosyltransferase 3 (558 aa).

Transmembrane regions (helical) follow at residues 53–73 (GLRSVFFPAVVALPFYLLKLL), 81–101 (VWFAPRVLQALVLTLIDVSVF), 164–184 (AYCGVRLYGNVIEALLVLLTL), and 190–210 (VPFLLLTGLASAIRVTSAVVL). N-linked (GlcNAc...) asparagine glycosylation is present at Asn220. A helical membrane pass occupies residues 234-254 (IVLTGLIVLVAVLGGVMVLDY). An N-linked (GlcNAc...) asparagine glycan is attached at Asn275. Helical transmembrane passes span 292 to 312 (VLVGIVGPHVLFTIAAPLVLW), 323 to 343 (PVLGMLGIGAWTLGFYSLIDH), 348 to 368 (FVFVVIPLSLITAAFVLVRWS), and 372 to 392 (AVVVKMNRLFVLFNIVMIYLM).

The protein belongs to the glycosyltransferase 22 family. PIGB subfamily.

It is found in the endoplasmic reticulum membrane. It participates in glycolipid biosynthesis; glycosylphosphatidylinositol-anchor biosynthesis. Mannosyltransferase involved in glycosylphosphatidylinositol-anchor biosynthesis. Transfers the third alpha-1,2-mannose to Man2-GlcN-acyl-PI during GPI precursor assembly. This chain is GPI mannosyltransferase 3 (GPI10), found in Trypanosoma brucei brucei (strain 927/4 GUTat10.1).